A 179-amino-acid chain; its full sequence is Large ribosomal subunit protein uL6 (179 aa).

This sequence belongs to the universal ribosomal protein uL6 family. As to quaternary structure, part of the 50S ribosomal subunit.

This protein binds to the 23S rRNA, and is important in its secondary structure. It is located near the subunit interface in the base of the L7/L12 stalk, and near the tRNA binding site of the peptidyltransferase center. In Mycobacterium sp. (strain KMS), this protein is Large ribosomal subunit protein uL6.